A 123-amino-acid polypeptide reads, in one-letter code: uncharacterized protein (123 aa).

This is an uncharacterized protein from Aquifex aeolicus (strain VF5).